An 86-amino-acid chain; its full sequence is Omega-theraphotoxin-Hhn1f 1 (86 aa).

Positions 1 to 21 (MKSIVFVALFGLALLAVVCSA) are cleaved as a signal peptide. A propeptide spanning residues 22 to 50 (SEDAHKELLKEVVRAMVVDKTDAVQAEER) is cleaved from the precursor. 3 cysteine pairs are disulfide-bonded: C52–C66, C59–C71, and C65–C78.

This sequence belongs to the neurotoxin 10 (Hwtx-1) family. 17 (Hntx-9) subfamily. As to expression, expressed by the venom gland.

The protein resides in the secreted. Its function is as follows. Ion channel inhibitor. This is Omega-theraphotoxin-Hhn1f 1 from Cyriopagopus hainanus (Chinese bird spider).